Consider the following 394-residue polypeptide: NADH dehydrogenase [ubiquinone] iron-sulfur protein 2 (394 aa).

Belongs to the complex I 49 kDa subunit family. Complex I is composed of at least 49 different subunits. This is a component of the iron-sulfur (IP) fragment of the enzyme.

It localises to the mitochondrion. The enzyme catalyses a ubiquinone + NADH + 5 H(+)(in) = a ubiquinol + NAD(+) + 4 H(+)(out). Its function is as follows. Core subunit of the mitochondrial membrane respiratory chain NADH dehydrogenase (Complex I) that is believed to belong to the minimal assembly required for catalysis. Complex I functions in the transfer of electrons from NADH to the respiratory chain. The immediate electron acceptor for the enzyme is believed to be ubiquinone. Component of the iron-sulfur (IP) fragment of the enzyme. The polypeptide is NADH dehydrogenase [ubiquinone] iron-sulfur protein 2 (NAD7) (Arabidopsis thaliana (Mouse-ear cress)).